The sequence spans 333 residues: NADH-quinone oxidoreductase subunit H (333 aa).

8 consecutive transmembrane segments (helical) span residues 15–35 (IALF…FVTY), 88–108 (YVLA…VLPF), 117–137 (IGVG…GVVA), 165–185 (LVMS…VDIV), 191–211 (VWFI…AVAE), 241–261 (FFML…TILF), 274–294 (IPGA…LIWF), and 313–333 (VLLP…AWFF).

This sequence belongs to the complex I subunit 1 family. As to quaternary structure, NDH-1 is composed of 14 different subunits. Subunits NuoA, H, J, K, L, M, N constitute the membrane sector of the complex.

It is found in the cell membrane. The enzyme catalyses a quinone + NADH + 5 H(+)(in) = a quinol + NAD(+) + 4 H(+)(out). Functionally, NDH-1 shuttles electrons from NADH, via FMN and iron-sulfur (Fe-S) centers, to quinones in the respiratory chain. The immediate electron acceptor for the enzyme in this species is believed to be ubiquinone. Couples the redox reaction to proton translocation (for every two electrons transferred, four hydrogen ions are translocated across the cytoplasmic membrane), and thus conserves the redox energy in a proton gradient. This subunit may bind ubiquinone. The sequence is that of NADH-quinone oxidoreductase subunit H from Geobacillus kaustophilus (strain HTA426).